An 860-amino-acid chain; its full sequence is Protein argonaute-2 (860 aa).

Positions 1-30 are disordered; it reads MYSGAGPALAPPAPPPPPIQGYAFKPPPRP. Y2 bears the 3'-nitrotyrosine mark. A compositionally biased stretch (pro residues) spans 9–30; it reads LAPPAPPPPPIQGYAFKPPPRP. Positions 230 to 349 constitute a PAZ domain; it reads PVIEFVCEVL…LPLEVCNIVA (120 aa). The segment at 312–317 is interaction with guide RNA; sequence YFKDRH. Position 388 is a phosphoserine (S388). The Piwi domain occupies 518-819; it reads LVVVILPGKT…VAFRARYHLV (302 aa). The segment at 525–567 is interaction with guide RNA; the sequence is GKTPVYAEVKRVGDTVLGMATQCVQMKNVQRTTPQTLSNLWLK. Positions 588–591 are interaction with GW182 family members; it reads FQQP. Residue D598 participates in a divalent metal cation binding. Positions 651 to 661 are interaction with GW182 family members; it reads LIQFYKSTRFK. D670 contributes to the a divalent metal cation binding site. The residue at position 701 (P701) is a 4-hydroxyproline. 3 interaction with guide RNA regions span residues 710-711, 754-762, and 791-813; these read KR, HAGIQGTSR, and YVRC…VAFR. H808 is a binding site for a divalent metal cation. 4 positions are modified to phosphoserine: S825, S829, S832, and S835.

Belongs to the argonaute family. Ago subfamily. In terms of assembly, interacts with DICER1 through its Piwi domain and with TARBP2 during assembly of the RNA-induced silencing complex (RISC). Together, DICER1, AGO2 and TARBP2 constitute the trimeric RISC loading complex (RLC), or micro-RNA (miRNA) loading complex (miRLC). Within the RLC/miRLC, DICER1 and TARBP2 are required to process precursor miRNAs (pre-miRNAs) to mature miRNAs and then load them onto AGO2. AGO2 bound to the mature miRNA constitutes the minimal RISC and may subsequently dissociate from DICER1 and TARBP2. Note however that the term RISC has also been used to describe the trimeric RLC/miRLC. The formation of RISC complexes containing siRNAs rather than miRNAs appears to occur independently of DICER1. Interacts with AGO1. Also interacts with DDB1, DDX5, DDX6, DDX20, DHX30, DHX36, DDX47, DHX9, ELAVL, FXR1, GEMIN4, HNRNPF, IGF2BP1, ILF3, IMP8, MATR3, PABPC1, PRMT5, P4HA1, P4HB, RBM4, SART3, TNRC6A, TNRC6B, UPF1 and YBX1. Interacts with the P-body components DCP1A and XRN1. Associates with polysomes and messenger ribonucleoproteins (mNRPs). Interacts with RBM4; the interaction is modulated under stress-induced conditions, occurs under both cell proliferation and differentiation conditions and in an RNA- and phosphorylation-independent manner. Interacts with LIMD1, WTIP and AJUBA. Interacts with TRIM71; the interaction increases in presence of RNA. Interacts with APOBEC3G in an RNA-dependent manner. Interacts with APOBEC3A, APOBEC3C, APOBEC3F and APOBEC3H. Interacts with DICER1, TARBP2, EIF6, MOV10 and RPL7A (60S ribosome subunit); they form a large RNA-induced silencing complex (RISC). Interacts with FMR1. Interacts with ZFP36. Interacts with RC3H1; the interaction is RNA independent. Found in a complex composed of AGO2, CHD7 and ARB2A. Interacts with SND1 and SYT11. Interacts with CLNK. Interacts with GARRE1. Interacts with GRB2; this interaction is important for the formation of a ternary complex containing GRB2, AGO2 and DICER1. The cofactor is Mg(2+). Mn(2+) serves as cofactor. Post-translationally, hydroxylated. 4-hydroxylation appears to enhance protein stability but is not required for miRNA-binding or endonuclease activity. Ubiquitinated on surface-exposed lysines by a SCF-like E3 ubiquitin-protein ligase complex containing ZSWIM8 during target-directed microRNA degradation (TDMD), a process that mediates degradation of microRNAs (miRNAs). Ubiquitination by the SCF-like E3 ubiquitin-protein ligase complex containing ZSWIM8 leads to its subsequent degradation, thereby exposing miRNAs for degradation. ZSWIM8 recognizes and binds AGO2 when it is engaged with a TDMD target. In terms of processing, phosphorylation at Ser-388 by AKT3; leads to up-regulate translational repression of microRNA target and down-regulate endonucleolytic cleavage. Post-translationally, a phosphorylation cycle of C-terminal serine cluster (Ser-825-Ser-835) regulates the release of target mRNAs. Target-binding leads to phosphorylation of these residues by CSNK1A1, which reduces the affinity of AGO2 for mRNA and enables target release. The ANKRD52-PPP6C phosphatase complex dephosphorylates the residues, which primes AGO2 for binding a new target.

Its subcellular location is the cytoplasm. It localises to the P-body. It is found in the nucleus. It catalyses the reaction Endonucleolytic cleavage to 5'-phosphomonoester.. Its function is as follows. Required for RNA-mediated gene silencing (RNAi) by the RNA-induced silencing complex (RISC). The 'minimal RISC' appears to include AGO2 bound to a short guide RNA such as a microRNA (miRNA) or short interfering RNA (siRNA). These guide RNAs direct RISC to complementary mRNAs that are targets for RISC-mediated gene silencing. The precise mechanism of gene silencing depends on the degree of complementarity between the miRNA or siRNA and its target. Binding of RISC to a perfectly complementary mRNA generally results in silencing due to endonucleolytic cleavage of the mRNA specifically by AGO2. Binding of RISC to a partially complementary mRNA results in silencing through inhibition of translation, and this is independent of endonuclease activity. May inhibit translation initiation by binding to the 7-methylguanosine cap, thereby preventing the recruitment of the translation initiation factor eIF4-E. May also inhibit translation initiation via interaction with EIF6, which itself binds to the 60S ribosomal subunit and prevents its association with the 40S ribosomal subunit. The inhibition of translational initiation leads to the accumulation of the affected mRNA in cytoplasmic processing bodies (P-bodies), where mRNA degradation may subsequently occur. In some cases RISC-mediated translational repression is also observed for miRNAs that perfectly match the 3' untranslated region (3'-UTR). Can also up-regulate the translation of specific mRNAs under certain growth conditions. Binds to the AU element of the 3'-UTR of the TNF (TNF-alpha) mRNA and up-regulates translation under conditions of serum starvation. Also required for transcriptional gene silencing (TGS), in which short RNAs known as antigene RNAs or agRNAs direct the transcriptional repression of complementary promoter regions. This chain is Protein argonaute-2 (AGO2), found in Bos taurus (Bovine).